The chain runs to 375 residues: Cinnamyl alcohol dehydrogenase 3 (375 aa).

Cys44 is a binding site for Zn(2+). Ser46 contributes to the NADP(+) binding site. Residues His66, Glu67, Cys97, Cys100, Cys103, Cys111, and Cys160 each contribute to the Zn(2+) site. Residues Thr164, 186–191 (GLGGLG), 209–214 (SRSSEK), Thr249, Gly273, and 296–298 (SQI) contribute to the NADP(+) site.

The protein belongs to the zinc-containing alcohol dehydrogenase family. In terms of assembly, homodimer. Requires Zn(2+) as cofactor. In terms of tissue distribution, expressed in the root tips. Expressed in the apical meristematic regions, leaf veins and at the base of the trichomes. Expressed at the base of the stems. Expressed in the abscission zones of newly formed siliques.

It catalyses the reaction (E)-cinnamyl alcohol + NADP(+) = (E)-cinnamaldehyde + NADPH + H(+). The catalysed reaction is (E)-coniferol + NADP(+) = (E)-coniferaldehyde + NADPH + H(+). The enzyme catalyses (E)-sinapyl alcohol + NADP(+) = (E)-sinapaldehyde + NADPH + H(+). It carries out the reaction (E)-4-coumaroyl alcohol + NADP(+) = (E)-4-coumaraldehyde + NADPH + H(+). It catalyses the reaction (E)-caffeyl alcohol + NADP(+) = (E)-caffeyl aldehyde + NADPH + H(+). Its pathway is aromatic compound metabolism; phenylpropanoid biosynthesis. Its function is as follows. Involved in lignin biosynthesis. Catalyzes the final step specific for the production of lignin monomers. Catalyzes the NADPH-dependent reduction of coniferaldehyde, 5-hydroxyconiferaldehyde, sinapaldehyde, 4-coumaraldehyde and caffeyl aldehyde to their respective alcohols. The protein is Cinnamyl alcohol dehydrogenase 3 of Arabidopsis thaliana (Mouse-ear cress).